Reading from the N-terminus, the 279-residue chain is Oxygen-dependent coproporphyrinogen-III oxidase (279 aa).

Residue serine 102 coordinates substrate. A divalent metal cation-binding residues include histidine 106 and histidine 116. Histidine 116 acts as the Proton donor in catalysis. 118–120 (NTR) serves as a coordination point for substrate. A divalent metal cation contacts are provided by histidine 149 and histidine 179. Residues 244 to 279 (YVEFNLLYDRGTKFGLMTDGNVEAILMSLPPEVKFN) are important for dimerization.

The protein belongs to the aerobic coproporphyrinogen-III oxidase family. Homodimer. A divalent metal cation is required as a cofactor.

The protein localises to the cytoplasm. It carries out the reaction coproporphyrinogen III + O2 + 2 H(+) = protoporphyrinogen IX + 2 CO2 + 2 H2O. It participates in porphyrin-containing compound metabolism; protoporphyrin-IX biosynthesis; protoporphyrinogen-IX from coproporphyrinogen-III (O2 route): step 1/1. Its function is as follows. Involved in the heme biosynthesis. Catalyzes the aerobic oxidative decarboxylation of propionate groups of rings A and B of coproporphyrinogen-III to yield the vinyl groups in protoporphyrinogen-IX. This Rickettsia felis (strain ATCC VR-1525 / URRWXCal2) (Rickettsia azadi) protein is Oxygen-dependent coproporphyrinogen-III oxidase.